A 367-amino-acid chain; its full sequence is MIPVYEPSLDGNERKYLNDCIDSGWVSSRGKYIDRFETEFAEFLKVKHATTVSNGTVALHLAMSALGITQGDEVIVPTFTYVASVNTIVQCGALPVFAEIEGESLQVSVEDVKRKINKKTKAVMAVHIYGQACDIQSLRDLCDEHGLYLIEDCAEAIGTAVNGKKVGTFGDVSTFSFFGNKTITSGEGGMVVSNSDIIIDKCLRLKNQGVVAGKRYWHDLVAYNYRMTNLCAAIGVAQLERVDKIIKAKRDIAEIYRSELAGLPMQVHKESNGTFHSYWLTSIILDQEFEVHRDGLMTFLENNDIESRPFFYPAHTLPMYEHLAEKTAFPLSNSYSHRGINLPSWPGLCDDQVKEICNCIKNYFNCI.

N6-(pyridoxal phosphate)lysine is present on Lys181.

This sequence belongs to the DegT/DnrJ/EryC1 family. Homotetramer. Pyridoxal 5'-phosphate is required as a cofactor.

It catalyses the reaction GDP-alpha-D-perosamine + 2-oxoglutarate = GDP-4-dehydro-alpha-D-rhamnose + L-glutamate. The protein operates within bacterial outer membrane biogenesis; LPS O-antigen biosynthesis. Its function is as follows. Catalyzes the synthesis of GDP-perosamine from GDP-4-keto-6-deoxy-D-mannose and L-glutamate. Also shows weak activity with L-glutamine. The protein is GDP-perosamine synthase of Vibrio cholerae.